We begin with the raw amino-acid sequence, 159 residues long: Protein RseC (159 aa).

Residues 1–72 lie on the Cytoplasmic side of the membrane; sequence MIKEWATVVS…QKVELGIAEG (72 aa). A helical transmembrane segment spans residues 73–95; the sequence is SLLSSALLVYMSPLVGLFLIASL. Residues 96-98 lie on the Periplasmic side of the membrane; it reads FQL. Residues 99–121 form a helical membrane-spanning segment; it reads LFASDVAALCGAILGGIGGFLIA. Over 122–159 the chain is Cytoplasmic; that stretch reads RGYSRKFAARAEWQPIILSVALPPGLVRFETSSEDASQ.

The protein belongs to the RseC family.

It is found in the cell inner membrane. In terms of biological role, may play a role in reduction of the SoxR iron-sulfur cluster. May work together with the RsxABCDGE complex. The chain is Protein RseC from Escherichia coli (strain K12).